A 346-amino-acid polypeptide reads, in one-letter code: MEKILVIRNDKLGDFMQAWPAFAMLKASNPKLKLTALVPSYTASLAEICPFIDHVIIDSKKNDKTDFKRLVQEIKAQQFDGMISFFSNTHNGKLAWKSGIKYRLAPATKWVQILYNHRLTQRRSRSEKSEAEYNQDLVRTFLQKHNMPVVEPKPPYLIFEKSAVENQRVFLQENLGLSANKKWIFVHSGSGGSATNLSLAQYADLIKGLLAEFDCNVVLTAGPGESEKAYELANLVNDLRVAIYDKNKGLVDFAHSLACADLFIAGSTGPLHLSSAFNIPTIGFYPNSRSSQPRRWKPINDVDKHIAFCPPAGKESQMNLELISIDNALAEISLFIRNMWQTSNNI.

It belongs to the glycosyltransferase 9 family.

This chain is Putative glycosyltransferase HI_0523, found in Haemophilus influenzae (strain ATCC 51907 / DSM 11121 / KW20 / Rd).